A 357-amino-acid chain; its full sequence is 3-isopropylmalate dehydrogenase (357 aa).

NAD(+) is bound at residue 76-89; sequence GYQWESLDISVRPE. Residues Arg96, Arg106, Arg134, and Asp224 each contribute to the substrate site. 3 residues coordinate Mg(2+): Asp224, Asp248, and Asp252. 282–294 contributes to the NAD(+) binding site; sequence GSAPDIAGQNIAN.

This sequence belongs to the isocitrate and isopropylmalate dehydrogenases family. LeuB type 1 subfamily. As to quaternary structure, homodimer. It depends on Mg(2+) as a cofactor. Requires Mn(2+) as cofactor.

Its subcellular location is the cytoplasm. It carries out the reaction (2R,3S)-3-isopropylmalate + NAD(+) = 4-methyl-2-oxopentanoate + CO2 + NADH. Its pathway is amino-acid biosynthesis; L-leucine biosynthesis; L-leucine from 3-methyl-2-oxobutanoate: step 3/4. Functionally, catalyzes the oxidation of 3-carboxy-2-hydroxy-4-methylpentanoate (3-isopropylmalate) to 3-carboxy-4-methyl-2-oxopentanoate. The product decarboxylates to 4-methyl-2 oxopentanoate. The protein is 3-isopropylmalate dehydrogenase of Hydrogenovibrio crunogenus (strain DSM 25203 / XCL-2) (Thiomicrospira crunogena).